The chain runs to 349 residues: MTIGIVSYGAYVPRYRIKIEEIARLWGDDAEALKNGLMVYEKSVPDVDEDAATIAVEAARYAMARSGVDPSRIGAVYTGSESHPYAVKPTSTIVAQAIGATPEMTAADFEFACKAGTAAVQACMGLVGSGMIDLGLAIGADVSQGAPSDALEYTAAAGGVACLIGRKESELAAIIEDTYSFTTDTPDFWRREGMPYPEHGGRFTGEPGYFKHVTNGAKGLLEKLGTKPEDYDYAVFHQPNGKFPSKAAKILGFTKAQITPGLVVPKIGNTYSGSCLMGIAATLDQAKPGDRIFATAFGSGAGSDAFSITVTDRIEEIRNRAPKVSELIKDPVYIDYARYARHKGKIRLA.

Positions 29 and 30 each coordinate (3S)-3-hydroxy-3-methylglutaryl-CoA. Glu-81 serves as the catalytic Proton donor/acceptor. Residues Cys-113 and Thr-154 each contribute to the (3S)-3-hydroxy-3-methylglutaryl-CoA site. Catalysis depends on Cys-113, which acts as the Acyl-thioester intermediate. Arg-202 is a CoA binding site. The (3S)-3-hydroxy-3-methylglutaryl-CoA site is built by Thr-204 and His-237. The active-site Proton donor/acceptor is the His-237. Position 242 (Lys-242) interacts with CoA. (3S)-3-hydroxy-3-methylglutaryl-CoA contacts are provided by Lys-246, Asn-269, and Ser-299.

The protein belongs to the thiolase-like superfamily. Archaeal HMG-CoA synthase family. As to quaternary structure, interacts with acetoacetyl-CoA thiolase that catalyzes the precedent step in the pathway and with a DUF35 protein. The acetoacetyl-CoA thiolase/HMG-CoA synthase complex channels the intermediate via a fused CoA-binding site, which allows for efficient coupling of the endergonic thiolase reaction with the exergonic HMGCS reaction.

It catalyses the reaction acetoacetyl-CoA + acetyl-CoA + H2O = (3S)-3-hydroxy-3-methylglutaryl-CoA + CoA + H(+). It functions in the pathway metabolic intermediate biosynthesis; (R)-mevalonate biosynthesis; (R)-mevalonate from acetyl-CoA: step 2/3. Catalyzes the condensation of acetyl-CoA with acetoacetyl-CoA to form 3-hydroxy-3-methylglutaryl-CoA (HMG-CoA). Functions in the mevalonate (MVA) pathway leading to isopentenyl diphosphate (IPP), a key precursor for the biosynthesis of isoprenoid compounds that are building blocks of archaeal membrane lipids. The sequence is that of Hydroxymethylglutaryl-CoA synthase from Methanosarcina acetivorans (strain ATCC 35395 / DSM 2834 / JCM 12185 / C2A).